Reading from the N-terminus, the 629-residue chain is MERFLMQSSLSTSSLIYPHGSYDSSCNYCDAGEDKKGRICYGMVADQLTCEDYQLLIDQGWRRSGTFLYKPNNSDKKTCCPQYTIRLDTSSFKPSKDNKSTIKKFNNYILNNIIKEKDSSTTSTTKDIINTTQIKSNTKNNNNKTNDENIIKLNNDIIEIILNNEFINKFNEQDKKILKENLKIKINSNKMIKETGSYSLSFGIFNKYRSELNQHSITIDQIINFTILEFNKTINNSDYQFNLEKGQNNHINFKMINSSQILNDSTKTKTLNIQNNSNKNSTTTATTATTTTTTTNEPKHKFEISIHKPKCTDEVFSLYCKYQKIIHKEDDEKTKSGFKRFLVDSPLIPIIHPDESYDDYVYDGKDDDDDDDDKDEKEDDEDEDQEDDEDEDDGNNEDEKKITKENKEKEIKNHIYKIGKKSKTLKTRKFGEIKTPKPGYGSFHQYYRLDGKLVGVGVIDILPECLSSVYFFYDPDFNFLSLGKYSALNEIEWVQKVSQSIPQLKYYYMGYYIHSCQKMKYKANYQPSQLLCLETFKWVEFKKAISFLQPDKKYSRFYFDENENNNNEKLTYFEKEPELLERVKFRQKNFTFHFSDVSVRFQNLLKDQVIDYINHVGPELTKELIFYFK.

Disordered stretches follow at residues 274–298 (QNNS…TNEP) and 353–405 (PDES…ITKE). Residues 282 to 295 (TTTATTATTTTTTT) show a composition bias toward low complexity. Residues 356-396 (SYDDYVYDGKDDDDDDDDKDEKEDDEDEDQEDDEDEDDGNN) are compositionally biased toward acidic residues.

It belongs to the R-transferase family.

It carries out the reaction an N-terminal L-alpha-aminoacyl-[protein] + L-arginyl-tRNA(Arg) = an N-terminal L-arginyl-L-aminoacyl-[protein] + tRNA(Arg) + H(+). Its function is as follows. Involved in the post-translational conjugation of arginine to the N-terminal aspartate or glutamate of a protein. This arginylation is required for degradation of the protein via the ubiquitin pathway. Does not arginylate cysteine residues. The polypeptide is Arginyl-tRNA--protein transferase 1 (ate1) (Dictyostelium discoideum (Social amoeba)).